The chain runs to 217 residues: Homologous-pairing protein 2 homolog (217 aa).

Residues 89-117 (LDASIMALTAKVQGLQQSCRHMEAELKEL) form an interaction with NR3C1, homodimerization and transcriptional activation almost abolished when missing region. Residues 93-153 (IMALTAKVQG…LKNIKAATNH (61 aa)) adopt a coiled-coil conformation. The segment at 118–182 (TSALTTPEMQ…WRKRKRMTTE (65 aa)) is DNA-binding. The interaction with NR3C1 decreased when missing stretch occupies residues 118 to 182 (TSALTTPEMQ…WRKRKRMTTE (65 aa)).

Belongs to the HOP2 family. Forms a stable heterodimer with MND1. Interacts with PSMC3/TBP1. Interacts with the DNA-binding domain of the nuclear receptors NR3C1/GR, ESR2/ER-beta, THRB and RXRA. In terms of processing, phosphorylated by PKA, PKC and MAPK.

The protein resides in the nucleus. In terms of biological role, plays an important role in meiotic recombination. Stimulates DMC1-mediated strand exchange required for pairing homologous chromosomes during meiosis. The complex PSMC3IP/MND1 binds DNA, stimulates the recombinase activity of DMC1 as well as DMC1 D-loop formation from double-strand DNA. This complex stabilizes presynaptic RAD51 and DMC1 filaments formed on single strand DNA to capture double-strand DNA. This complex stimulates both synaptic and presynaptic critical steps in RAD51 and DMC1-promoted homologous pairing. May inhibit HIV-1 viral protein TAT activity and modulate the activity of proteasomes through association with PSMC3. Plays a role as a coactivator in nuclear receptor-mediated transcription. This chain is Homologous-pairing protein 2 homolog (Psmc3ip), found in Rattus norvegicus (Rat).